Reading from the N-terminus, the 195-residue chain is MEGHRKVELSEALALGPDWRHACHALLYAPDPRKLFGRIPMRFAVLMQMRFDGRLGFPGGFVDAQDSCLEDGLNRELREELGEAMSAFRVERSDYRSSHIAARPRVVAHFYAKRLTLEQLQAVEARAPQAKDHGLEVLGLVRVPLYVLRDGEGGLPAFLENSFIGAAREQLLEALQDLKLLDPGIIAKLKIPDSK.

The region spanning 18-173 (DWRHACHALL…IGAAREQLLE (156 aa)) is the Nudix hydrolase domain. H24, R50, and F57 together coordinate substrate. Residues G59, E76, E80, and H99 each contribute to the Mn(2+) site. A Nudix box motif is present at residues 61 to 82 (FVDAQDSCLEDGLNRELREELG). Q170 lines the substrate pocket. E173 lines the Mn(2+) pocket.

It belongs to the Nudix hydrolase family. NUDT16 subfamily. In terms of assembly, homodimer. Mg(2+) serves as cofactor. Requires Mn(2+) as cofactor. Co(2+) is required as a cofactor. In terms of tissue distribution, expressed in brain, testis, spleen, lung, heart, liver, kidney and muscle (at protein level).

The protein resides in the nucleus. Its subcellular location is the nucleolus. It localises to the nucleoplasm. The protein localises to the cytoplasm. It carries out the reaction a 5'-end (N(7)-methyl 5'-triphosphoguanosine)-ribonucleoside in mRNA + H2O = N(7)-methyl-GDP + a 5'-end phospho-ribonucleoside in mRNA + 2 H(+). The catalysed reaction is IDP + H2O = IMP + phosphate + H(+). It catalyses the reaction dIDP + H2O = dIMP + phosphate + H(+). The enzyme catalyses a 5'-end NAD(+)-phospho-ribonucleoside in mRNA + H2O = a 5'-end phospho-ribonucleoside in mRNA + NAD(+) + H(+). It carries out the reaction a 5'-end FAD-phospho-ribonucleoside in mRNA + H2O = a 5'-end phospho-adenosine-phospho-ribonucleoside in mRNA + FMN + 2 H(+). The catalysed reaction is a 5'-end CoA-ribonucleoside in mRNA + H2O = a 5'-end phospho-adenosine-phospho-ribonucleoside in mRNA + (R)-4'-phosphopantetheine + 2 H(+). Its function is as follows. RNA-binding and decapping enzyme that catalyzes the cleavage of the cap structure of snoRNAs and mRNAs in a metal-dependent manner. Part of the U8 snoRNP complex that is required for the accumulation of mature 5.8S and 28S rRNA. Has diphosphatase activity and removes m7G and/or m227G caps from U8 snoRNA and leaves a 5'monophosphate on the RNA. Also catalyzes the cleavage of the cap structure on mRNAs. Does not hydrolyze cap analog structures like 7-methylguanosine nucleoside triphosphate (m7GpppG). Also hydrolysis m7G- and m227G U3-capped RNAs but with less efficiencies. Has broad substrate specificity with manganese or cobalt as cofactor and can act on various RNA species. Binds to the U8 snoRNA; metal is not required for RNA-binding. May play a role in the regulation of snoRNAs and mRNAs degradation. Also acts as a phosphatase; hydrolyzes the non-canonical purine nucleotides inosine diphosphate (IDP) and deoxyinosine diphosphate (dITP) as well as guanosine diphosphate (GDP), deoxyguanosine diphosphate (dGDP), xanthine diphosphate (XDP), inosine triphosphate (ITP) and deoxyinosine triphosphate (ITP) to their respective monophosphate derivatives and does not distinguish between the deoxy- and ribose forms. The order of activity with different substrates is IDP &gt; dIDP &gt;&gt; GDP = dGDP &gt; XDP = ITP = dITP. Binds strongly to GTP, ITP and XTP. Participates in the hydrolysis of dIDP/IDP and probably excludes non-canonical purines from RNA and DNA precursor pools, thus preventing their incorporation into RNA and DNA and avoiding chromosomal lesions. Exhibits decapping activity towards NAD-capped RNAs and FAD-capped RNAs. Exhibits decapping activity towards dpCoA-capped RNAs in vitro. This chain is U8 snoRNA-decapping enzyme (Nudt16), found in Mus musculus (Mouse).